The following is a 290-amino-acid chain: uncharacterized protein (290 aa).

Residues Ala-7–Asn-21 and Thr-100 contribute to the NAD(+) site. Lys-175 is an active-site residue. An NAD(+)-binding site is contributed by Lys-243.

Belongs to the HIBADH-related family.

This is an uncharacterized protein from Synechocystis sp. (strain ATCC 27184 / PCC 6803 / Kazusa).